A 443-amino-acid polypeptide reads, in one-letter code: Dihydroorotate dehydrogenase (quinone), mitochondrial (443 aa).

A mitochondrion-targeting transit peptide spans 1–21; sequence MYQRSLFRGVAQGLKRSSVRF. The helical transmembrane segment at 38–54 threads the bilayer; it reads WKLLSVIGSFTAGVAIY. FMN-binding positions include 122–126 and serine 146; that span reads AGFDK. Position 126 (lysine 126) interacts with substrate. Serine 168 carries the phosphoserine modification. Position 171 to 175 (171 to 175) interacts with substrate; the sequence is NRYGF. 2 residues coordinate FMN: asparagine 234 and asparagine 264. 264 to 269 provides a ligand contact to substrate; the sequence is NVSSPN. Catalysis depends on serine 267, which acts as the Nucleophile. FMN is bound at residue lysine 306. 335 to 336 is a substrate binding site; the sequence is NT. FMN-binding positions include glycine 358, glycine 387, and 408–409; that span reads YT.

The protein belongs to the dihydroorotate dehydrogenase family. Type 2 subfamily. The cofactor is FMN.

The protein localises to the mitochondrion inner membrane. The enzyme catalyses (S)-dihydroorotate + a quinone = orotate + a quinol. Its pathway is pyrimidine metabolism; UMP biosynthesis via de novo pathway; orotate from (S)-dihydroorotate (quinone route): step 1/1. Its function is as follows. In the de novo pyrimidine biosynthesis pathway, catalyzes the stereospecific oxidation of (S)-dihydroorotate to orotate with reduction of flavin and the transfer of electrons to ubiquinone, which is part of the respiratory chain. Does not use fumarate and NAD as electron acceptors. The polypeptide is Dihydroorotate dehydrogenase (quinone), mitochondrial (ura3) (Schizosaccharomyces pombe (strain 972 / ATCC 24843) (Fission yeast)).